We begin with the raw amino-acid sequence, 458 residues long: MVPRTGRRKTNYAVPPPVLQLASGWSALVVCLLHLLFSFLYGGGQQPIHPRPSSRLPRIFSFADRDIMRIGLPTQDFHAEHLGAIDPSSHHHMSQMAGQNGISHAQGRRGPKYRTSCDRCQAAKVKCGHEKPSCRRCTYHKVECVYGISRRMGRPRAKKNSGKDASPSPQGSINGASDENSRSKSATPAPVSFTGTEPITEARQSPVANAEGGRISRAESTQRAEPWTPSLTTNFEHPETSEGADDSAHGPMMQSMNTPLTFLPTENRMELDDFNDYPPMSSFMEDLADPMMSQQPISAPPSLDILDPHALIPDRTPTGNTRDTFNQVDTGLSVSLPQTTQLWNTSQAHQLHALFESNSTSKSKRRASTGQEISGIVSFNSVGHSNSGFGNKRMGELQIATGPLVSIGAGEQSAMMNIGPNPDTSSVAASRKFAMEEEDDPCSEIKLNPNRLRLEDGK.

Residues 117-144 (CDRCQAAKVKCGHEKPSCRRCTYHKVEC) constitute a DNA-binding region (zn(2)-C6 fungal-type). Disordered stretches follow at residues 153–256 (GRPR…MQSM) and 435–458 (MEEE…EDGK). Polar residues-rich tracts occupy residues 167-186 (PSPQ…SKSA), 193-207 (FTGT…QSPV), and 223-235 (RAEP…TTNF).

The protein localises to the nucleus. Functionally, transcription factor; part of the gene cluster that mediates the biosynthesis of 11'-deoxyverticillin A, one of the dimeric epipolythiodioxopiperazines (ETPs) from the verticillin family that act as mycotoxins. 11'-deoxyverticillin A is required for normal conidiation. Directly binds the consensus motif 5'-(T/C)(C/A)(G/T)GN3CC(G/T)(A/G)(G/C)-3' localized in the upstream regions of the verticillin biosynthetic genes. This chain is Transcription factor verZ, found in Clonostachys rogersoniana.